Here is a 430-residue protein sequence, read N- to C-terminus: Protein trichome birefringence-like 24 (430 aa).

A helical; Signal-anchor for type II membrane protein membrane pass occupies residues 15 to 35; the sequence is VLLIKLISAILISFFAFRLFI. The GDS motif motif lies at 153–155; the sequence is GDS. The DCXHWCLPGXXDXWN motif signature appears at 406 to 420; the sequence is DCLHWCLPGPFDYLN.

It belongs to the PC-esterase family. TBL subfamily.

It localises to the membrane. Its function is as follows. May act as a bridging protein that binds pectin and other cell wall polysaccharides. Probably involved in maintaining esterification of pectins. May be involved in the specific O-acetylation of cell wall polymers. The chain is Protein trichome birefringence-like 24 (TBL24) from Arabidopsis thaliana (Mouse-ear cress).